Here is a 291-residue protein sequence, read N- to C-terminus: Protein ILRUN (291 aa).

Residues 199–291 (NTQPHRKVEG…LHGPYPFGQS (93 aa)) form a disordered region. A compositionally biased stretch (polar residues) spans 212–228 (PFASPQKNRQSDENNLT). Phosphoserine occurs at positions 215, 222, and 265. A compositionally biased stretch (low complexity) spans 257 to 276 (LSQSSVNLSPSSPANNLSVV).

In terms of assembly, interacts with IRF3; the interaction inhibits IRF3 binding to its DNA consensus sequence.

The protein resides in the cytoplasm. Its subcellular location is the nucleus. Its function is as follows. Negative regulator of innate antiviral response. Blocks IRF3-dependent cytokine production such as IFNA, IFNB and TNF. Interacts with IRF3 and inhibits IRF3 recruitment to type I IFN promoter sequences while also reducing nuclear levels of the coactivators EP300 and CREBBP. The protein is Protein ILRUN of Mus musculus (Mouse).